A 712-amino-acid chain; its full sequence is Matrix metalloproteinase-9 (712 aa).

Residues 1–19 (MSPLQPLVLALLVLACCSA) form the signal peptide. A propeptide spans 20–106 (VPRRRQPTVV…PRCGVPDVGR (87 aa)) (activation peptide). An N-linked (GlcNAc...) asparagine glycan is attached at asparagine 38. The Cysteine switch signature appears at 97-104 (PRCGVPDV). Cysteine 99 lines the Zn(2+) pocket. Asparagine 120 and asparagine 127 each carry an N-linked (GlcNAc...) asparagine glycan. Positions 131 and 165 each coordinate Ca(2+). Residues histidine 175 and aspartate 177 each coordinate Zn(2+). Positions 182, 183, 185, and 187 each coordinate Ca(2+). Histidine 190 is a binding site for Zn(2+). The Ca(2+) site is built by glycine 197, glutamine 199, and aspartate 201. Residue histidine 203 coordinates Zn(2+). Ca(2+) is bound by residues aspartate 205, aspartate 206, and glutamate 208. Fibronectin type-II domains are found at residues 225–273 (AKGA…FCPS), 283–331 (ADGK…FCPT), and 342–390 (AAGE…FCPD). Intrachain disulfides connect cysteine 230/cysteine 256, cysteine 244/cysteine 271, cysteine 288/cysteine 314, cysteine 302/cysteine 329, cysteine 347/cysteine 373, and cysteine 361/cysteine 388. Residue histidine 401 participates in Zn(2+) binding. Glutamate 402 is a catalytic residue. Histidine 405 and histidine 411 together coordinate Zn(2+). The segment at 440 to 519 (QHLYGPRPEP…PTESPDPAED (80 aa)) is disordered. A compositionally biased stretch (low complexity) spans 455–465 (TTTTTTTTEPQ). Residues 491-504 (TGPPAAGPTGPPTA) show a composition bias toward pro residues. The segment covering 505 to 514 (GPSAAPTESP) has biased composition (low complexity). Cysteine 521 and cysteine 709 are joined by a disulfide. 4 Hemopexin repeats span residues 523 to 568 (VDIF…WPAL), 569 to 613 (PRKL…GLGP), 615 to 662 (VAQV…FPGV), and 663 to 709 (PIST…LLKC).

Belongs to the peptidase M10A family. Exists as monomer or homodimer; disulfide-linked. Also exists as heterodimer with LCN2. Macrophages and transformed cell lines produce only the monomeric form. Interacts with ECM1. It depends on Zn(2+) as a cofactor. Requires Ca(2+) as cofactor. Post-translationally, N- and O-glycosylated.

The protein localises to the secreted. It is found in the extracellular space. Its subcellular location is the extracellular matrix. The enzyme catalyses Cleavage of gelatin types I and V and collagen types IV and V.. Its function is as follows. Matrix metalloproteinase that plays an essential role in local proteolysis of the extracellular matrix and in leukocyte migration. Could play a role in bone osteoclastic resorption. Cleaves KiSS1 at a Gly-|-Leu bond. Cleaves NINJ1 to generate the Secreted ninjurin-1 form. Cleaves type IV and type V collagen into large C-terminal three quarter fragments and shorter N-terminal one quarter fragments. Degrades fibronectin but not laminin or Pz-peptide. This chain is Matrix metalloproteinase-9, found in Bos taurus (Bovine).